The following is a 554-amino-acid chain: Beta-eudesmol synthase (554 aa).

Mg(2+)-binding residues include Asp305, Asp309, and Glu456. Positions 305-309 (DDIYD) match the DDXXD motif motif.

This sequence belongs to the terpene synthase family. Mg(2+) is required as a cofactor. It depends on Mn(2+) as a cofactor. Expressed in rhizomes. Detected in stems, but not in leaves.

It localises to the cytoplasm. It carries out the reaction (2E,6E)-farnesyl diphosphate + H2O = beta-eudesmol + diphosphate. It catalyses the reaction (2E,6E)-farnesyl diphosphate + H2O = 10-epi-gamma-eudesmol + diphosphate. The catalysed reaction is (2E,6E)-farnesyl diphosphate + H2O = alpha-eudesmol + diphosphate. It functions in the pathway secondary metabolite biosynthesis; terpenoid biosynthesis. In terms of biological role, involved in the biosynthesis of beta-eudesmol, a sesquiterpene with antifungal activity and responsible for resistance of plants to ant attack. Produces mainly beta-eudesmol, but also smaller amounts of 10-epi-gamma-eudesmol, alpha-eudesmol and aristolene. This chain is Beta-eudesmol synthase (ZSS2), found in Zingiber zerumbet (Shampoo ginger).